The sequence spans 393 residues: NAD(P)H-quinone oxidoreductase subunit H, chloroplastic (393 aa).

Belongs to the complex I 49 kDa subunit family. NDH is composed of at least 16 different subunits, 5 of which are encoded in the nucleus.

Its subcellular location is the plastid. It localises to the chloroplast thylakoid membrane. It catalyses the reaction a plastoquinone + NADH + (n+1) H(+)(in) = a plastoquinol + NAD(+) + n H(+)(out). The enzyme catalyses a plastoquinone + NADPH + (n+1) H(+)(in) = a plastoquinol + NADP(+) + n H(+)(out). NDH shuttles electrons from NAD(P)H:plastoquinone, via FMN and iron-sulfur (Fe-S) centers, to quinones in the photosynthetic chain and possibly in a chloroplast respiratory chain. The immediate electron acceptor for the enzyme in this species is believed to be plastoquinone. Couples the redox reaction to proton translocation, and thus conserves the redox energy in a proton gradient. This is NAD(P)H-quinone oxidoreductase subunit H, chloroplastic from Fagopyrum esculentum subsp. ancestrale (Wild buckwheat).